The sequence spans 393 residues: uncharacterized protein (393 aa).

The OBG-type G domain maps to 2–266 (AMIGLVGKPN…AEKAGIIKRK (265 aa)). GTP is bound by residues 8–15 (GKPNVGKS) and 78–82 (DVAGL). The 77-residue stretch at 314-390 (DMIVVYPVED…KHNDIIKIVS (77 aa)) folds into the TGS domain.

The protein belongs to the TRAFAC class OBG-HflX-like GTPase superfamily. OBG GTPase family.

This is an uncharacterized protein from Methanocaldococcus jannaschii (strain ATCC 43067 / DSM 2661 / JAL-1 / JCM 10045 / NBRC 100440) (Methanococcus jannaschii).